A 433-amino-acid polypeptide reads, in one-letter code: ATP-dependent protease ATPase subunit HslU (433 aa).

Residues Ile18, 60–65 (GVGKTE), Asp246, Glu311, and Arg383 each bind ATP.

The protein belongs to the ClpX chaperone family. HslU subfamily. In terms of assembly, a double ring-shaped homohexamer of HslV is capped on each side by a ring-shaped HslU homohexamer. The assembly of the HslU/HslV complex is dependent on binding of ATP.

It is found in the cytoplasm. In terms of biological role, ATPase subunit of a proteasome-like degradation complex; this subunit has chaperone activity. The binding of ATP and its subsequent hydrolysis by HslU are essential for unfolding of protein substrates subsequently hydrolyzed by HslV. HslU recognizes the N-terminal part of its protein substrates and unfolds these before they are guided to HslV for hydrolysis. This Cereibacter sphaeroides (strain KD131 / KCTC 12085) (Rhodobacter sphaeroides) protein is ATP-dependent protease ATPase subunit HslU.